The sequence spans 95 residues: Antitoxin VapB41 (95 aa).

Functionally, antitoxin component of a type II toxin-antitoxin (TA) system. This is Antitoxin VapB41 (vapB41) from Mycobacterium tuberculosis (strain CDC 1551 / Oshkosh).